The chain runs to 213 residues: Large ribosomal subunit protein uL18c (213 aa).

The protein belongs to the universal ribosomal protein uL18 family.

The protein localises to the plastid. Its subcellular location is the apicoplast. The polypeptide is Large ribosomal subunit protein uL18c (RPL18) (Plasmodium falciparum (isolate 3D7)).